We begin with the raw amino-acid sequence, 191 residues long: Photosystem I assembly protein Ycf4 (191 aa).

Transmembrane regions (helical) follow at residues 34-54 (VASM…SSYF) and 68-88 (IFVP…LLAI).

It belongs to the Ycf4 family.

It is found in the cellular thylakoid membrane. Its function is as follows. Seems to be required for the assembly of the photosystem I complex. The polypeptide is Photosystem I assembly protein Ycf4 (Prochlorococcus marinus (strain NATL1A)).